The chain runs to 524 residues: Lysophospholipid acyltransferase LPCAT4 (524 aa).

Transmembrane regions (helical) follow at residues 40–62 (CLLG…FLLW) and 87–107 (TVCH…LGFL). The HXXXXD motif motif lies at 129–134 (HSTFFD). The N-linked (GlcNAc...) asparagine glycan is linked to Asn152. Positions 489-524 (PPHTSRGTSQTPNASSPGNPTALANGTVQAPKQKGD) are disordered. Residues 493–518 (SRGTSQTPNASSPGNPTALANGTVQA) are compositionally biased toward polar residues.

It belongs to the 1-acyl-sn-glycerol-3-phosphate acyltransferase family. Widely expressed with predominant level in brain.

The protein localises to the endoplasmic reticulum membrane. It carries out the reaction a 1-acyl-sn-glycero-3-phosphoethanolamine + an acyl-CoA = a 1,2-diacyl-sn-glycero-3-phosphoethanolamine + CoA. It catalyses the reaction a 1-O-(1Z-alkenyl)-sn-glycero-3-phosphoethanolamine + an acyl-CoA = a 1-O-(1Z-alkenyl)-2-acyl-sn-glycero-3-phosphoethanolamine + CoA. The enzyme catalyses a 1-acyl-sn-glycero-3-phosphocholine + an acyl-CoA = a 1,2-diacyl-sn-glycero-3-phosphocholine + CoA. The catalysed reaction is a 1-O-alkyl-sn-glycero-3-phosphocholine + acetyl-CoA = a 1-O-alkyl-2-acetyl-sn-glycero-3-phosphocholine + CoA. It carries out the reaction a 1-acyl-sn-glycero-3-phospho-L-serine + an acyl-CoA = a 1,2-diacyl-sn-glycero-3-phospho-L-serine + CoA. It catalyses the reaction octanoyl-CoA + a 1-acyl-sn-glycero-3-phosphoethanolamine = 1-acyl-2-octanoyl-sn-glycero-3-phosphoethanolamine + CoA. The enzyme catalyses a 1-acyl-sn-glycero-3-phosphoethanolamine + hexadecanoyl-CoA = 1-acyl-2-hexadecanoyl-sn-glycero-3-phosphoethanolamine + CoA. The catalysed reaction is a 1-acyl-sn-glycero-3-phosphoethanolamine + octadecanoyl-CoA = 1-acyl-2-octadecanoyl-sn-glycero-3-phosphoethanolamine + CoA. It carries out the reaction a 1-acyl-sn-glycero-3-phosphoethanolamine + (9Z)-octadecenoyl-CoA = 1-acyl-2-(9Z)-octadecenoyl-sn-glycero-3-phosphoethanolamine + CoA. It catalyses the reaction a 1-acyl-sn-glycero-3-phosphoethanolamine + (5Z,8Z,11Z,14Z)-eicosatetraenoyl-CoA = 1-acyl-2-(5Z,8Z,11Z,14Z)-eicosatetraenoyl-sn-glycero-3-phosphoethanolamine + CoA. The enzyme catalyses a 1-O-(1Z-alkenyl)-sn-glycero-3-phosphoethanolamine + octanoyl-CoA = 1-O-(1Z)-alkenyl-2-octanoyl-sn-glycero-3-phosphoethanolamine + CoA. The catalysed reaction is a 1-O-(1Z-alkenyl)-sn-glycero-3-phosphoethanolamine + hexadecanoyl-CoA = 1-O-(1Z)-alkenyl-2-hexadecanoyl-sn-glycero-3-phosphoethanolamine + CoA. It carries out the reaction a 1-O-(1Z-alkenyl)-sn-glycero-3-phosphoethanolamine + octadecanoyl-CoA = 1-O-(1Z)-alkenyl-2-octadecanoyl-sn-glycero-3-phosphoethanolamine + CoA. It catalyses the reaction a 1-O-(1Z-alkenyl)-sn-glycero-3-phosphoethanolamine + (9Z)-octadecenoyl-CoA = 1-O-(1Z)-alkenyl-2-(9Z)-octadecenoyl-sn-glycero-3-phosphoethanolamine + CoA. The enzyme catalyses a 1-O-(1Z-alkenyl)-sn-glycero-3-phosphoethanolamine + (5Z,8Z,11Z,14Z)-eicosatetraenoyl-CoA = 1-O-(1Z)-alkenyl-2-(5Z,8Z,11Z,14Z)-eicosatetraenoyl-sn-glycero-3-phosphoethanolamine + CoA. The catalysed reaction is a 1-acyl-sn-glycero-3-phosphocholine + hexadecanoyl-CoA = 1-acyl-2-hexadecanoyl-sn-glycero-3-phosphocholine + CoA. It carries out the reaction a 1-acyl-sn-glycero-3-phosphocholine + (9Z)-octadecenoyl-CoA = a 1-acyl-2-(9Z)-octadecenoyl-sn-glycero-3-phosphocholine + CoA. It catalyses the reaction 1-O-hexadecyl-sn-glycero-3-phosphocholine + (9Z)-octadecenoyl-CoA = 1-O-hexadecyl-2-(9Z)-octadecenoyl-sn-glycero-3-phosphocholine + CoA. The enzyme catalyses 1-O-hexadecyl-sn-glycero-3-phosphocholine + (5Z,8Z,11Z,14Z)-eicosatetraenoyl-CoA = 1-O-hexadecyl-2-(5Z,8Z,11Z,14Z)-eicosatetraenoyl-sn-glycero-3-phosphocholine + CoA. The catalysed reaction is 1-hexadecanoyl-sn-glycero-3-phospho-L-serine + (9Z)-octadecenoyl-CoA = 1-hexadecanoyl-2-(9Z-octadecenoyl)-sn-glycero-3-phospho-L-serine + CoA. It carries out the reaction 1-octadecanoyl-sn-glycero-3-phospho-(1'-sn-glycerol) + (9Z)-octadecenoyl-CoA = 1-octadecanoyl-2-(9Z-octadecenoyl)-sn-glycero-3-phospho-(1'-sn-glycerol) + CoA. It catalyses the reaction 1-octadecanoyl-sn-glycero-3-phospho-(1'-sn-glycerol) + (5Z,8Z,11Z,14Z)-eicosatetraenoyl-CoA = 1-octadecanoyl-2-(5Z,8Z,11Z,14Z-eicosatetraenoyl)-sn-glycero-3-phospho-(1'-sn-glycerol) + CoA. It participates in lipid metabolism; phospholipid metabolism. In terms of biological role, displays acyl-CoA-dependent lysophospholipid acyltransferase activity with a subset of lysophospholipids as substrates; converts lysophosphatidylethanolamine to phosphatidylethanolamine, lysophosphatidylcholine to phosphatidycholine, 1-alkenyl-lysophatidylethanolamine to 1-alkenyl-phosphatidylethanolamine, lysophosphatidylglycerol and alkyl-lysophosphatidylcholine to phosphatidylglycerol and alkyl-phosphatidylcholine, respectively. In contrast, has no lysophosphatidylinositol, glycerol-3-phosphate, diacylglycerol or lysophosphatidic acid acyltransferase activity. Prefers long chain acyl-CoAs (C16, C18) as acyl donors. The polypeptide is Lysophospholipid acyltransferase LPCAT4 (LPCAT4) (Homo sapiens (Human)).